The chain runs to 160 residues: Major strawberry allergen Fra a 1.08 (160 aa).

It belongs to the BetVI family. Post-translationally, phosphorylated in vivo. Phosphorylation prevents its activity as ribonuclease. In terms of tissue distribution, highly expressed in roots. Expressed a low levels in ripe red fruits.

In terms of biological role, possesses ribonuclease activity in vitro. This is Major strawberry allergen Fra a 1.08 from Fragaria ananassa (Strawberry).